Here is a 146-residue protein sequence, read N- to C-terminus: Anti-sigma F factor (146 aa).

It belongs to the anti-sigma-factor family.

It carries out the reaction L-seryl-[protein] + ATP = O-phospho-L-seryl-[protein] + ADP + H(+). It catalyses the reaction L-threonyl-[protein] + ATP = O-phospho-L-threonyl-[protein] + ADP + H(+). In terms of biological role, binds to sigma F and blocks its ability to form an RNA polymerase holoenzyme (E-sigma F). Phosphorylates SpoIIAA on a serine residue. This phosphorylation may enable SpoIIAA to act as an anti-anti-sigma factor that counteracts SpoIIAB and thus releases sigma F from inhibition. The sequence is that of Anti-sigma F factor from Bacillus licheniformis.